Consider the following 54-residue polypeptide: Ovomucoid (54 aa).

In terms of domain architecture, Kazal-like spans 4–54 (VDCSEYPKPACTLEHRPLCGSDNKTYGNKCNFCNAVVESNGTLTLSHFGKC). 3 cysteine pairs are disulfide-bonded: Cys6/Cys36, Cys14/Cys33, and Cys22/Cys54. An N-linked (GlcNAc...) asparagine glycan is attached at Asn43.

It localises to the secreted. The polypeptide is Ovomucoid (Pavo muticus (Green peafowl)).